A 923-amino-acid polypeptide reads, in one-letter code: DNA mismatch repair protein MutS (923 aa).

ATP is bound at residue 671-678; that stretch reads GPNMAGKS.

This sequence belongs to the DNA mismatch repair MutS family.

Functionally, this protein is involved in the repair of mismatches in DNA. It is possible that it carries out the mismatch recognition step. This protein has a weak ATPase activity. The polypeptide is DNA mismatch repair protein MutS (Rhodopseudomonas palustris (strain BisB5)).